The following is a 314-amino-acid chain: R2-like ligand binding oxidase (314 aa).

Mn(2+) contacts are provided by glutamate 68, glutamate 101, and histidine 104. The segment at residues 71–162 (VTEDIQPFMS…AAQVRASVTY (92 aa)) is a cross-link (3-(O4'-tyrosyl)-valine (Val-Tyr)). Fe cation is bound at residue glutamate 101. Positions 167, 202, and 205 each coordinate Fe cation.

Belongs to the ribonucleoside diphosphate reductase small chain family. R2-like ligand binding oxidase subfamily. As to quaternary structure, homodimer. Fe cation is required as a cofactor. Requires Mn(2+) as cofactor.

Probable oxidase that might be involved in lipid metabolism. This is R2-like ligand binding oxidase from Mycobacterium bovis (strain ATCC BAA-935 / AF2122/97).